Consider the following 409-residue polypeptide: 4-hydroxy-3-methylbut-2-en-1-yl diphosphate synthase (ferredoxin) (409 aa).

Residues 1-12 are compositionally biased toward polar residues; the sequence is MQTLDRPNAPTQ. Residues 1-22 are disordered; it reads MQTLDRPNAPTQQPYPEPVYPR. 4 residues coordinate [4Fe-4S] cluster: Cys-314, Cys-317, Cys-348, and Glu-355.

This sequence belongs to the IspG family. The cofactor is [4Fe-4S] cluster.

The enzyme catalyses (2E)-4-hydroxy-3-methylbut-2-enyl diphosphate + 2 oxidized [2Fe-2S]-[ferredoxin] + H2O = 2-C-methyl-D-erythritol 2,4-cyclic diphosphate + 2 reduced [2Fe-2S]-[ferredoxin] + H(+). Its pathway is isoprenoid biosynthesis; isopentenyl diphosphate biosynthesis via DXP pathway; isopentenyl diphosphate from 1-deoxy-D-xylulose 5-phosphate: step 5/6. Converts 2C-methyl-D-erythritol 2,4-cyclodiphosphate (ME-2,4cPP) into 1-hydroxy-2-methyl-2-(E)-butenyl 4-diphosphate. This Synechococcus sp. (strain JA-2-3B'a(2-13)) (Cyanobacteria bacterium Yellowstone B-Prime) protein is 4-hydroxy-3-methylbut-2-en-1-yl diphosphate synthase (ferredoxin).